Here is a 219-residue protein sequence, read N- to C-terminus: MPVVTLTGIPGYTGLRIEIDMVCLFDWLLAGCSSKHDYTNPPWNAKVPVQRAMQWMPISQKAGAAWGVDPQLITAIIAIESGGNPNAVSKSNAIGLMQLKASTSGRDVYRRMGWSGEPTTSELKNPERNISMGAAYLNILETGPLAGIEDPKVLQYALVVSYANGAGALLRTFSSDRKKAISKINDLDADEFLDHVARNHPAPQAPRYIYKLEQALDAM.

It belongs to the transglycosylase Slt family.

It carries out the reaction Endolytic cleavage of the (1-&gt;4)-beta-glycosidic linkage between N-acetylmuramic acid (MurNAc) and N-acetylglucosamine (GlcNAc) residues in peptidoglycan with concomitant formation of a 1,6-anhydrobond in the MurNAc residue.. Murein-degrading enzyme. May play a role in recycling of muropeptides during cell elongation and/or cell division (Potential). This is Endo-type membrane-bound lytic murein transglycosylase A-like protein from Shigella flexneri.